A 197-amino-acid chain; its full sequence is 3-isopropylmalate dehydratase small subunit (197 aa).

The protein belongs to the LeuD family. LeuD type 1 subfamily. Heterodimer of LeuC and LeuD.

The enzyme catalyses (2R,3S)-3-isopropylmalate = (2S)-2-isopropylmalate. It participates in amino-acid biosynthesis; L-leucine biosynthesis; L-leucine from 3-methyl-2-oxobutanoate: step 2/4. In terms of biological role, catalyzes the isomerization between 2-isopropylmalate and 3-isopropylmalate, via the formation of 2-isopropylmaleate. In Geobacillus kaustophilus (strain HTA426), this protein is 3-isopropylmalate dehydratase small subunit.